Consider the following 503-residue polypeptide: Probable cytosol aminopeptidase (503 aa).

Mn(2+)-binding residues include Lys270 and Asp275. Lys282 is an active-site residue. 3 residues coordinate Mn(2+): Asp293, Asp352, and Glu354. Arg356 is a catalytic residue.

This sequence belongs to the peptidase M17 family. Requires Mn(2+) as cofactor.

Its subcellular location is the cytoplasm. The catalysed reaction is Release of an N-terminal amino acid, Xaa-|-Yaa-, in which Xaa is preferably Leu, but may be other amino acids including Pro although not Arg or Lys, and Yaa may be Pro. Amino acid amides and methyl esters are also readily hydrolyzed, but rates on arylamides are exceedingly low.. It catalyses the reaction Release of an N-terminal amino acid, preferentially leucine, but not glutamic or aspartic acids.. Functionally, presumably involved in the processing and regular turnover of intracellular proteins. Catalyzes the removal of unsubstituted N-terminal amino acids from various peptides. The polypeptide is Probable cytosol aminopeptidase (Salmonella typhi).